The chain runs to 80 residues: Gamma-conotoxin-like Am6.6 (80 aa).

A signal peptide spans 1-19 (MEKLTILLLVAAILMSTQA). Residues 20–45 (LNQEQRQQAKINLLSKKKPSAERWRR) constitute a propeptide that is removed on maturation. Cystine bridges form between Cys47–Cys61, Cys54–Cys65, and Cys60–Cys70. 2 positions are modified to 4-carboxyglutamate: Glu56 and Glu59. Residue Glu71 is modified to 4-carboxyglutamate. Pro76 is modified (4-hydroxyproline). The propeptide occupies 78–80 (RAI).

The protein belongs to the conotoxin O2 family. As to expression, expressed by the venom duct.

It is found in the secreted. In terms of biological role, gamma-conotoxins may act on voltage-gated non-specific cation pacemaker channels (HCN). This is Gamma-conotoxin-like Am6.6 from Conus amadis (Amadis cone).